Here is a 332-residue protein sequence, read N- to C-terminus: Glyceraldehyde-3-phosphate dehydrogenase 1 (332 aa).

Positions 11, 12, 33, and 120 each coordinate NAD(+). D-glyceraldehyde 3-phosphate contacts are provided by residues 149-151 (SCT), Thr180, 209-210 (TG), and Arg232. Residue Cys150 is the Nucleophile of the active site. NAD(+)-binding residues include Asn314 and Tyr318.

It belongs to the glyceraldehyde-3-phosphate dehydrogenase family. As to quaternary structure, homotetramer.

The protein localises to the cytoplasm. The catalysed reaction is D-glyceraldehyde 3-phosphate + phosphate + NAD(+) = (2R)-3-phospho-glyceroyl phosphate + NADH + H(+). It catalyses the reaction NADH + H2O = (6R)-NADHX. It carries out the reaction NADH + H2O = (6S)-NADHX. The enzyme catalyses NADPH + H2O = (6R)-NADPHX. The catalysed reaction is NADPH + H2O = (6S)-NADPHX. Its pathway is carbohydrate degradation; glycolysis; pyruvate from D-glyceraldehyde 3-phosphate: step 1/5. Glyceraldehyde-3-phosphate dehydrogenase (GAPDH) involved in glycolysis and gluconeogenesis. Catalyzes the reaction of glyceraldehyde-3-phosphate to 1,3 bis-phosphoglycerate. The contribution of the TDH1, TDH2, and TDH3 to the total glyceraldehyde-3-phosphate dehydrogenase activity is 10-15, 25-30, and 50-60%, respectively. May be involved in a process other than glycolysis because it is synthesized by cells in stationary phase. Its function is as follows. As a side activity, catalyzes the hydration of the nicotinamide ring of NADH or NADPH at the C6 position to give the corresponding hydrates, NADHX and NADPHX, which exist as R and S epimers, that cannot act as electron donors or acceptors and inhibit several dehydrogenases, making them toxic. The sequence is that of Glyceraldehyde-3-phosphate dehydrogenase 1 from Saccharomyces cerevisiae (strain ATCC 204508 / S288c) (Baker's yeast).